The sequence spans 149 residues: Large ribosomal subunit protein bL9 (149 aa).

The protein belongs to the bacterial ribosomal protein bL9 family.

Binds to the 23S rRNA. This Helicobacter pylori (strain ATCC 700392 / 26695) (Campylobacter pylori) protein is Large ribosomal subunit protein bL9.